We begin with the raw amino-acid sequence, 262 residues long: Ribosomal RNA small subunit methyltransferase A (262 aa).

Residues Ile18, Gly43, Glu65, Asp91, and Asn110 each contribute to the S-adenosyl-L-methionine site.

This sequence belongs to the class I-like SAM-binding methyltransferase superfamily. rRNA adenine N(6)-methyltransferase family. RsmA subfamily.

The protein localises to the cytoplasm. The catalysed reaction is adenosine(1518)/adenosine(1519) in 16S rRNA + 4 S-adenosyl-L-methionine = N(6)-dimethyladenosine(1518)/N(6)-dimethyladenosine(1519) in 16S rRNA + 4 S-adenosyl-L-homocysteine + 4 H(+). Its function is as follows. Specifically dimethylates two adjacent adenosines (A1518 and A1519) in the loop of a conserved hairpin near the 3'-end of 16S rRNA in the 30S particle. May play a critical role in biogenesis of 30S subunits. This is Ribosomal RNA small subunit methyltransferase A from Ehrlichia ruminantium (strain Gardel).